Consider the following 386-residue polypeptide: Succinate--CoA ligase [ADP-forming] subunit beta (386 aa).

Positions 9-244 constitute an ATP-grasp domain; it reads KELLKQFGVT…LDEEDPAEIE (236 aa). ATP contacts are provided by residues K46, 53–55, E99, A102, and E107; that span reads GRG. 2 residues coordinate Mg(2+): N199 and D213. Residues N264 and 321–323 each bind substrate; that span reads GIM.

This sequence belongs to the succinate/malate CoA ligase beta subunit family. As to quaternary structure, heterotetramer of two alpha and two beta subunits. The cofactor is Mg(2+).

The catalysed reaction is succinate + ATP + CoA = succinyl-CoA + ADP + phosphate. It catalyses the reaction GTP + succinate + CoA = succinyl-CoA + GDP + phosphate. The protein operates within carbohydrate metabolism; tricarboxylic acid cycle; succinate from succinyl-CoA (ligase route): step 1/1. Succinyl-CoA synthetase functions in the citric acid cycle (TCA), coupling the hydrolysis of succinyl-CoA to the synthesis of either ATP or GTP and thus represents the only step of substrate-level phosphorylation in the TCA. The beta subunit provides nucleotide specificity of the enzyme and binds the substrate succinate, while the binding sites for coenzyme A and phosphate are found in the alpha subunit. The polypeptide is Succinate--CoA ligase [ADP-forming] subunit beta (Bordetella pertussis (strain Tohama I / ATCC BAA-589 / NCTC 13251)).